Reading from the N-terminus, the 118-residue chain is Small ribosomal subunit protein uS13 (118 aa).

A disordered region spans residues 93 to 118; it reads RNLPVRGQRSKTNARTRKGPRKPIKR.

The protein belongs to the universal ribosomal protein uS13 family. In terms of assembly, part of the 30S ribosomal subunit. Forms a loose heterodimer with protein S19. Forms two bridges to the 50S subunit in the 70S ribosome.

Functionally, located at the top of the head of the 30S subunit, it contacts several helices of the 16S rRNA. In the 70S ribosome it contacts the 23S rRNA (bridge B1a) and protein L5 of the 50S subunit (bridge B1b), connecting the 2 subunits; these bridges are implicated in subunit movement. Contacts the tRNAs in the A and P-sites. This Saccharophagus degradans (strain 2-40 / ATCC 43961 / DSM 17024) protein is Small ribosomal subunit protein uS13.